The primary structure comprises 330 residues: Probable pectinesterase 55 (330 aa).

The N-terminal stretch at 1 to 24 (MGTHRIILGLAALCCFCLPHLIEA) is a signal peptide. N-linked (GlcNAc...) asparagine glycosylation is found at Asn-38 and Asn-52. The active-site Proton donor is the Asp-161. Asp-182 (nucleophile) is an active-site residue. Substrate is bound by residues Arg-243 and Trp-245. Residues Asn-257 and Asn-292 are each glycosylated (N-linked (GlcNAc...) asparagine).

It belongs to the pectinesterase family.

Its subcellular location is the secreted. The protein resides in the cell wall. It catalyses the reaction [(1-&gt;4)-alpha-D-galacturonosyl methyl ester](n) + n H2O = [(1-&gt;4)-alpha-D-galacturonosyl](n) + n methanol + n H(+). Its pathway is glycan metabolism; pectin degradation; 2-dehydro-3-deoxy-D-gluconate from pectin: step 1/5. Acts in the modification of cell walls via demethylesterification of cell wall pectin. The polypeptide is Probable pectinesterase 55 (PME55) (Arabidopsis thaliana (Mouse-ear cress)).